A 428-amino-acid chain; its full sequence is Enolase (428 aa).

Gln165 lines the (2R)-2-phosphoglycerate pocket. Glu207 (proton donor) is an active-site residue. Residues Asp244, Glu285, and Asp312 each contribute to the Mg(2+) site. Positions 337, 366, 367, and 388 each coordinate (2R)-2-phosphoglycerate. Lys337 functions as the Proton acceptor in the catalytic mechanism.

This sequence belongs to the enolase family. Component of the RNA degradosome, a multiprotein complex involved in RNA processing and mRNA degradation. The cofactor is Mg(2+).

The protein resides in the cytoplasm. The protein localises to the secreted. It is found in the cell surface. It carries out the reaction (2R)-2-phosphoglycerate = phosphoenolpyruvate + H2O. It participates in carbohydrate degradation; glycolysis; pyruvate from D-glyceraldehyde 3-phosphate: step 4/5. In terms of biological role, catalyzes the reversible conversion of 2-phosphoglycerate (2-PG) into phosphoenolpyruvate (PEP). It is essential for the degradation of carbohydrates via glycolysis. The polypeptide is Enolase (Coxiella burnetii (strain CbuK_Q154) (Coxiella burnetii (strain Q154))).